Consider the following 378-residue polypeptide: DNA primase small subunit PriS (378 aa).

Residues D98, D100, and D282 contribute to the active site.

This sequence belongs to the eukaryotic-type primase small subunit family. Heterodimer of a small subunit (PriS) and a large subunit (PriL). Requires Mg(2+) as cofactor. Mn(2+) is required as a cofactor.

Catalytic subunit of DNA primase, an RNA polymerase that catalyzes the synthesis of short RNA molecules used as primers for DNA polymerase during DNA replication. The small subunit contains the primase catalytic core and has DNA synthesis activity on its own. Binding to the large subunit stabilizes and modulates the activity, increasing the rate of DNA synthesis while decreasing the length of the DNA fragments, and conferring RNA synthesis capability. The DNA polymerase activity may enable DNA primase to also catalyze primer extension after primer synthesis. May also play a role in DNA repair. The protein is DNA primase small subunit PriS of Methanosphaerula palustris (strain ATCC BAA-1556 / DSM 19958 / E1-9c).